Here is a 77-residue protein sequence, read N- to C-terminus: Structural DNA-binding protein p10 (77 aa).

The segment covering 1–12 (MPTKAGTKSTAN) has biased composition (polar residues). Residues 1–38 (MPTKAGTKSTANKKTTKGPSKSGSAKGHTGKTHATALH) are disordered. A compositionally biased stretch (low complexity) spans 17-27 (KGPSKSGSAKG).

Belongs to the asfivirus P10 family.

Its subcellular location is the virion. In terms of biological role, may play a role in genome packaging through direct interaction with viral DNA. Binds to ssDNA and dsDNA with the same apparent affinity in vitro. The chain is Structural DNA-binding protein p10 from Ornithodoros (relapsing fever ticks).